The sequence spans 550 residues: Solute carrier family 22 member 6 (550 aa).

At 1 to 9 (MAFNDLLQQ) the chain is on the cytoplasmic side. A helical membrane pass occupies residues 10–30 (VGGVGRFQQIQVTLVVLPLLL). Residues 31–135 (MASHNTVQNF…LVCSHRALRQ (105 aa)) lie on the Extracellular side of the membrane. Asn-56, Asn-92, and Asn-113 each carry an N-linked (GlcNAc...) asparagine glycan. A helical transmembrane segment spans residues 136-156 (LAQSLYMVGVLLGAMVFGYLA). Residues 157–164 (DRLGRRKV) lie on the Cytoplasmic side of the membrane. The helical transmembrane segment at 165 to 187 (LILNYLQTAVSGTCAAFAPNFPI) threads the bilayer. Topologically, residues 188-190 (YCA) are extracellular. The chain crosses the membrane as a helical span at residues 191–213 (FRLLSGMSLAGIALNCMTLNVEW). At 214–224 (MPIHTRACVGT) the chain is on the cytoplasmic side. A helical transmembrane segment spans residues 225–245 (LIGYVYSLGQFLLAGVAYAVP). Residues 246–248 (HWR) lie on the Extracellular side of the membrane. A helical membrane pass occupies residues 249–269 (HLQLLISVPFFAFFIYSWFFI). The Cytoplasmic segment spans residues 270 to 337 (ESARWHSSSG…ELLRCPTLRH (68 aa)). A helical transmembrane segment spans residues 338–358 (LFLCLSMLWFATSFAYYGLVM). Topologically, residues 359–368 (DLQGFGVSIY) are extracellular. A helical membrane pass occupies residues 369–389 (LIQVIFGAVDLPAKLVGFLVI). At 390–395 (NSLGRR) the chain is on the cytoplasmic side. The helical transmembrane segment at 396–416 (PAQMAALLLAGICILLNGVVP) threads the bilayer. Topologically, residues 417 to 425 (QDQSVIRTS) are extracellular. The helical transmembrane segment at 426-446 (LAVLGKGCLAASFNCIFLYTG) threads the bilayer. The Cytoplasmic segment spans residues 447–456 (ELYPTMIRQT). Residues 457 to 477 (GLGMGSTMARVGSIVSPLVSM) traverse the membrane as a helical segment. At 478-484 (TTELYPS) the chain is on the extracellular side. Residues 485-505 (VPLFIYGAVPVAASAVTVLLP) form a helical membrane-spanning segment. Residues 506–550 (ETLGQPLPDTVQDLESRKGKQTPQQQEHQKYMVPLQASAQEKNGL) lie on the Cytoplasmic side of the membrane. Positions 513-550 (PDTVQDLESRKGKQTPQQQEHQKYMVPLQASAQEKNGL) are disordered.

This sequence belongs to the major facilitator (TC 2.A.1) superfamily. Organic cation transporter (TC 2.A.1.19) family. Glycosylated. Glycosylation is necessary for proper targeting of the transporter to the plasma membrane. In terms of tissue distribution, expressed in kidney; in the basolateral membrane of the proximal tubule.

Its subcellular location is the basolateral cell membrane. It is found in the basal cell membrane. The catalysed reaction is (6R)-L-erythro-5,6,7,8-tetrahydrobiopterin(out) + a dicarboxylate(in) = (6R)-L-erythro-5,6,7,8-tetrahydrobiopterin(in) + a dicarboxylate(out). It catalyses the reaction L-erythro-7,8-dihydrobiopterin(out) + a dicarboxylate(in) = L-erythro-7,8-dihydrobiopterin(in) + a dicarboxylate(out). The enzyme catalyses L-sepiapterin(out) + a dicarboxylate(in) = L-sepiapterin(in) + a dicarboxylate(out). It carries out the reaction prostaglandin F2alpha(out) + a dicarboxylate(in) = prostaglandin F2alpha(in) + a dicarboxylate(out). The catalysed reaction is prostaglandin E2(out) + a dicarboxylate(in) = prostaglandin E2(in) + a dicarboxylate(out). It catalyses the reaction 3',5'-cyclic AMP(out) + a dicarboxylate(in) = 3',5'-cyclic AMP(in) + a dicarboxylate(out). The enzyme catalyses 3',5'-cyclic GMP(out) + a dicarboxylate(in) = 3',5'-cyclic GMP(in) + a dicarboxylate(out). It carries out the reaction urate(out) + a dicarboxylate(in) = urate(in) + a dicarboxylate(out). The catalysed reaction is kynurenate(out) + glutarate(in) = kynurenate(in) + glutarate(out). It catalyses the reaction (indol-3-yl)acetate(out) + a dicarboxylate(in) = (indol-3-yl)acetate(in) + a dicarboxylate(out). The enzyme catalyses indoxyl sulfate(out) + a dicarboxylate(in) = indoxyl sulfate(in) + a dicarboxylate(out). It carries out the reaction N-benzoylglycine(out) + a dicarboxylate(in) = N-benzoylglycine(in) + a dicarboxylate(out). The catalysed reaction is 3-carboxy-4-methyl-5-propyl-2-furanpropanoate(out) + a dicarboxylate(in) = 3-carboxy-4-methyl-5-propyl-2-furanpropanoate(in) + a dicarboxylate(out). In terms of biological role, secondary active transporter that functions as a Na(+)-independent organic anion (OA)/dicarboxylate antiporter where the uptake of one molecule of OA into the cell is coupled with an efflux of one molecule of intracellular dicarboxylate such as 2-oxoglutarate or glutarate. Mediates the uptake of OA across the basolateral side of proximal tubule epithelial cells, thereby contributing to the renal elimination of endogenous OA from the systemic circulation into the urine. Functions as a biopterin transporters involved in the uptake and the secretion of coenzymes tetrahydrobiopterin (BH4), dihydrobiopterin (BH2) and sepiapterin to urine, thereby determining baseline levels of blood biopterins. Transports prostaglandin E2 (PGE2) and prostaglandin F2-alpha (PGF2-alpha) and may contribute to their renal excretion. Also mediates the uptake of cyclic nucleotides such as cAMP and cGMP. Involved in the transport of neuroactive tryptophan metabolites kynurenate (KYNA) and xanthurenate (XA) and may contribute to their secretion from the brain. May transport glutamate. Also involved in the disposition of uremic toxins and potentially toxic xenobiotics by the renal organic anion secretory pathway, helping reduce their undesired toxicological effects on the body. Uremic toxins include the indoxyl sulfate (IS), hippurate/N-benzoylglycine (HA), indole acetate (IA), 3-carboxy-4- methyl-5-propyl-2-furanpropionate (CMPF) and urate. Xenobiotics include the mycotoxin ochratoxin (OTA). May also contribute to the transport of organic compounds in testes across the blood-testis-barrier. The protein is Solute carrier family 22 member 6 of Macaca fascicularis (Crab-eating macaque).